The sequence spans 324 residues: Polyphosphate glucokinase (324 aa).

A disordered region spans residues 53–79 (TSTDATADTPRTSPPSDTAGTTSRHRG). Residues 62-74 (PRTSPPSDTAGTT) show a composition bias toward polar residues. An ATP-binding site is contributed by 83 to 88 (DIGGSS).

Belongs to the ROK (NagC/XylR) family. As to quaternary structure, homodimer.

The enzyme catalyses [phosphate](n) + D-glucose = [phosphate](n-1) + D-glucose 6-phosphate + H(+). The catalysed reaction is D-glucose + ATP = D-glucose 6-phosphate + ADP + H(+). Its function is as follows. Catalyzes the phosphorylation of glucose using polyphosphate or ATP as the phosphoryl donor. The chain is Polyphosphate glucokinase (ppgK) from Mycobacterium leprae (strain TN).